The following is a 315-amino-acid chain: Lipoyl synthase (315 aa).

[4Fe-4S] cluster is bound by residues C62, C67, C73, C88, C92, C95, and S302. One can recognise a Radical SAM core domain in the interval 74–292; the sequence is FNHGTATFMI…KIALKLGFIR (219 aa).

It belongs to the radical SAM superfamily. Lipoyl synthase family. [4Fe-4S] cluster serves as cofactor.

The protein localises to the cytoplasm. It catalyses the reaction [[Fe-S] cluster scaffold protein carrying a second [4Fe-4S](2+) cluster] + N(6)-octanoyl-L-lysyl-[protein] + 2 oxidized [2Fe-2S]-[ferredoxin] + 2 S-adenosyl-L-methionine + 4 H(+) = [[Fe-S] cluster scaffold protein] + N(6)-[(R)-dihydrolipoyl]-L-lysyl-[protein] + 4 Fe(3+) + 2 hydrogen sulfide + 2 5'-deoxyadenosine + 2 L-methionine + 2 reduced [2Fe-2S]-[ferredoxin]. It functions in the pathway protein modification; protein lipoylation via endogenous pathway; protein N(6)-(lipoyl)lysine from octanoyl-[acyl-carrier-protein]: step 2/2. In terms of biological role, catalyzes the radical-mediated insertion of two sulfur atoms into the C-6 and C-8 positions of the octanoyl moiety bound to the lipoyl domains of lipoate-dependent enzymes, thereby converting the octanoylated domains into lipoylated derivatives. The polypeptide is Lipoyl synthase (Vesicomyosocius okutanii subsp. Calyptogena okutanii (strain HA)).